The sequence spans 1748 residues: WD repeat-containing protein 90 (1748 aa).

A binds with microtubules region spans residues 1-207; that stretch reads MARAWQHPFL…VTPMPREMAF (207 aa). The residue at position 241 (S241) is a Phosphoserine. The tract at residues 274–308 is disordered; that stretch reads QTPSPTASGRAALAPRPFPEVSLSQERSDASNADG. 21 WD repeats span residues 407–450, 452–494, 501–541, 615–654, 656–695, 698–737, 740–779, 782–821, 882–922, 926–964, 969–1009, 1156–1201, 1204–1245, 1247–1286, 1298–1326, 1327–1376, 1433–1472, 1475–1520, 1523–1562, 1568–1614, and 1715–1748; these read GHTD…CLFR, PMHV…LGGE, AHTD…LRSC, SSGP…VLLE, EHEG…YHML, SHTA…QLYD, SSED…VLVE, CHRG…WHVL, SRLD…IIRE, VHPE…SPGP, GHSE…QSFP, GHSA…CQHL, PHST…LVSS, RLPE…ADIS, VGAG…VCVW, DTRA…ELRC, GHRS…LVIQ, VLNQ…MELK, PHPV…TFRV, GAPI…NHCE, and GHDN…VPGL. A disordered region spans residues 1004 to 1071; it reads SDQSFPGAPP…GARDTRNSGA (68 aa).

It belongs to the WD repeat WDR90/POC16 family.

It localises to the cytoplasm. It is found in the cytoskeleton. The protein localises to the microtubule organizing center. Its subcellular location is the centrosome. The protein resides in the centriole. It localises to the centriolar satellite. Its function is as follows. Microtubule-binding protein that plays a crucial role in ensuring inner core protein localization within the centriole core, as well as in maintaining the microtubule wall integrity and the overall centriole roundness and stability. Required for efficient primary cilium formation. The protein is WD repeat-containing protein 90 (WDR90) of Homo sapiens (Human).